Consider the following 582-residue polypeptide: Threonine--tRNA ligase (582 aa).

The segment at 185–478 (DHRKLGKELE…LTEQYGGAFP (294 aa)) is catalytic. Residues Cys-278, His-329, and His-455 each coordinate Zn(2+).

It belongs to the class-II aminoacyl-tRNA synthetase family. As to quaternary structure, homodimer. Zn(2+) is required as a cofactor.

The protein resides in the cytoplasm. The enzyme catalyses tRNA(Thr) + L-threonine + ATP = L-threonyl-tRNA(Thr) + AMP + diphosphate + H(+). In terms of biological role, catalyzes the attachment of threonine to tRNA(Thr) in a two-step reaction: L-threonine is first activated by ATP to form Thr-AMP and then transferred to the acceptor end of tRNA(Thr). Also edits incorrectly charged L-seryl-tRNA(Thr). The polypeptide is Threonine--tRNA ligase (Dehalococcoides mccartyi (strain ATCC BAA-2100 / JCM 16839 / KCTC 5957 / BAV1)).